The primary structure comprises 257 residues: uncharacterized protein (257 aa).

The N-terminal stretch at 1-22 is a signal peptide; the sequence is MGYLKRFALYISVMILIFAIAG. Cys23 carries N-palmitoyl cysteine lipidation. The S-diacylglycerol cysteine moiety is linked to residue Cys23.

It belongs to the staphylococcal tandem lipoprotein family.

Its subcellular location is the cell membrane. This is an uncharacterized protein from Staphylococcus aureus (strain USA300).